A 116-amino-acid chain; its full sequence is Large ribosomal subunit protein uL24 (116 aa).

The segment at 1-21 (MATNNGAGKARHKFHVKKGDT) is disordered.

Belongs to the universal ribosomal protein uL24 family. Part of the 50S ribosomal subunit.

One of two assembly initiator proteins, it binds directly to the 5'-end of the 23S rRNA, where it nucleates assembly of the 50S subunit. Its function is as follows. One of the proteins that surrounds the polypeptide exit tunnel on the outside of the subunit. This Gloeobacter violaceus (strain ATCC 29082 / PCC 7421) protein is Large ribosomal subunit protein uL24.